A 551-amino-acid polypeptide reads, in one-letter code: Transcription factor 7-like 1-B (551 aa).

The span at 1 to 11 (MPQLNSGGGDE) shows a compositional bias: gly residues. An interaction with CTNNB1-A region spans residues 1–61 (MPQLNSGGGD…SENHSSDSDS (61 aa)). Disordered stretches follow at residues 1 to 77 (MPQL…EKPR), 183 to 213 (GTPP…PYYP), 391 to 474 (WSAR…SLTT), and 492 to 515 (SPSS…SRPI). Basic and acidic residues-rich tracts occupy residues 17 to 32 (ELIR…EKSP) and 52 to 77 (SENH…EKPR). The segment at 109–312 (LGGHYLPNGA…SPNLSTKSNV (204 aa)) is interaction with AES and TLE4-A. Residues 324-392 (IKKPLNAFML…LHSQLYPSWS (69 aa)) constitute a DNA-binding region (HMG box). The segment covering 407–416 (KQSPEMENYT) has biased composition (basic and acidic residues). Positions 408–551 (QSPEMENYTK…PLSLVTRSSD (144 aa)) are interaction with CTBP-B. Low complexity predominate over residues 445-464 (SPATPSAALASPAAPAATHS). Residues 465–474 (EQAQPLSLTT) show a composition bias toward polar residues.

The protein belongs to the TCF/LEF family. In terms of assembly, interacts with csnk1e, ctnnb1-A, ctbp-B, dact1-A and gsk3b. May interact with ase and tle4-A. Interacts with tle1-B. Post-translationally, phosphorylated. Phosphorylation by csnk1e promotes binding to ctnnb1-A while phosphorylation by gsk3b may reverse this effect.

Its subcellular location is the nucleus. Participates in the Wnt signaling pathway. Binds to DNA and acts as a repressor in the absence of ctnnb1-A and possibly ctnnb1-B, and as an activator in the presence of these proteins. Required early in development for the establishment of the dorsal body axis in response to maternal Wnt signaling. This Xenopus laevis (African clawed frog) protein is Transcription factor 7-like 1-B (tcf7l1-b).